A 52-amino-acid polypeptide reads, in one-letter code: Metchnikowin (52 aa).

Positions 1–24 are cleaved as a signal peptide; it reads MQLNLGAIFLALLGVMATATSVLA. The propeptide occupies 25–26; the sequence is EP. Positions 28–52 are disordered; it reads RHQGPIFDTRPSPFNPNQPRPGPIY. Positions 40–52 are enriched in pro residues; sequence PFNPNQPRPGPIY.

In terms of tissue distribution, hemolymph (at protein level). Highest expression in fat body.

It is found in the secreted. In terms of biological role, potent antifungal and antibacterial activity against Gram-positive bacteria. In Drosophila melanogaster (Fruit fly), this protein is Metchnikowin (Mtk).